A 364-amino-acid polypeptide reads, in one-letter code: Chorismate synthase (364 aa).

Arg47 contributes to the NADP(+) binding site. FMN is bound by residues 124–126 (RAS), Gly287, 302–306 (KPTAT), and Arg328.

This sequence belongs to the chorismate synthase family. In terms of assembly, homotetramer. FMNH2 is required as a cofactor.

It catalyses the reaction 5-O-(1-carboxyvinyl)-3-phosphoshikimate = chorismate + phosphate. The protein operates within metabolic intermediate biosynthesis; chorismate biosynthesis; chorismate from D-erythrose 4-phosphate and phosphoenolpyruvate: step 7/7. In terms of biological role, catalyzes the anti-1,4-elimination of the C-3 phosphate and the C-6 proR hydrogen from 5-enolpyruvylshikimate-3-phosphate (EPSP) to yield chorismate, which is the branch point compound that serves as the starting substrate for the three terminal pathways of aromatic amino acid biosynthesis. This reaction introduces a second double bond into the aromatic ring system. The sequence is that of Chorismate synthase from Prochlorococcus marinus (strain MIT 9515).